Reading from the N-terminus, the 205-residue chain is uncharacterized protein (205 aa).

Transmembrane regions (helical) follow at residues 18-38 (ATVN…GTIG), 69-89 (LGIF…CFYA), 106-126 (VVWI…YYIM), and 127-147 (LLHP…LFLI).

The protein localises to the mitochondrion membrane. This is an uncharacterized protein from Arabidopsis thaliana (Mouse-ear cress).